Here is a 62-residue protein sequence, read N- to C-terminus: Photosystem II reaction center protein Z (62 aa).

Helical transmembrane passes span 8–28 (AVFA…VVLA) and 41–61 (FSGA…NSFI).

It belongs to the PsbZ family. PSII is composed of 1 copy each of membrane proteins PsbA, PsbB, PsbC, PsbD, PsbE, PsbF, PsbH, PsbI, PsbJ, PsbK, PsbL, PsbM, PsbT, PsbY, PsbZ, Psb30/Ycf12, at least 3 peripheral proteins of the oxygen-evolving complex and a large number of cofactors. It forms dimeric complexes.

It localises to the plastid. The protein localises to the chloroplast thylakoid membrane. Functionally, may control the interaction of photosystem II (PSII) cores with the light-harvesting antenna, regulates electron flow through the 2 photosystem reaction centers. PSII is a light-driven water plastoquinone oxidoreductase, using light energy to abstract electrons from H(2)O, generating a proton gradient subsequently used for ATP formation. This Marchantia polymorpha (Common liverwort) protein is Photosystem II reaction center protein Z.